The following is a 207-amino-acid chain: Thiamine-phosphate synthase (207 aa).

4-amino-2-methyl-5-(diphosphooxymethyl)pyrimidine contacts are provided by residues 37–41 and Asn-69; that span reads QLREK. Residues Asp-70 and Asp-89 each coordinate Mg(2+). Residue Ser-108 participates in 4-amino-2-methyl-5-(diphosphooxymethyl)pyrimidine binding. Residue 134–136 participates in 2-[(2R,5Z)-2-carboxy-4-methylthiazol-5(2H)-ylidene]ethyl phosphate binding; that stretch reads TGS. Residue Lys-137 participates in 4-amino-2-methyl-5-(diphosphooxymethyl)pyrimidine binding. 2-[(2R,5Z)-2-carboxy-4-methylthiazol-5(2H)-ylidene]ethyl phosphate-binding positions include Gly-165 and 185 to 186; that span reads IS.

It belongs to the thiamine-phosphate synthase family. Mg(2+) serves as cofactor.

It catalyses the reaction 2-[(2R,5Z)-2-carboxy-4-methylthiazol-5(2H)-ylidene]ethyl phosphate + 4-amino-2-methyl-5-(diphosphooxymethyl)pyrimidine + 2 H(+) = thiamine phosphate + CO2 + diphosphate. It carries out the reaction 2-(2-carboxy-4-methylthiazol-5-yl)ethyl phosphate + 4-amino-2-methyl-5-(diphosphooxymethyl)pyrimidine + 2 H(+) = thiamine phosphate + CO2 + diphosphate. The enzyme catalyses 4-methyl-5-(2-phosphooxyethyl)-thiazole + 4-amino-2-methyl-5-(diphosphooxymethyl)pyrimidine + H(+) = thiamine phosphate + diphosphate. Its pathway is cofactor biosynthesis; thiamine diphosphate biosynthesis; thiamine phosphate from 4-amino-2-methyl-5-diphosphomethylpyrimidine and 4-methyl-5-(2-phosphoethyl)-thiazole: step 1/1. Its function is as follows. Condenses 4-methyl-5-(beta-hydroxyethyl)thiazole monophosphate (THZ-P) and 2-methyl-4-amino-5-hydroxymethyl pyrimidine pyrophosphate (HMP-PP) to form thiamine monophosphate (TMP). The sequence is that of Thiamine-phosphate synthase from Desulfitobacterium hafniense (strain DSM 10664 / DCB-2).